The following is a 700-amino-acid chain: Putative proline-rich receptor-like protein kinase PERK6 (700 aa).

Residues 1 to 180 form a disordered region; it reads MAEGQSPENS…SGGGSNSSGN (180 aa). The Extracellular segment spans residues 1–186; that stretch reads MAEGQSPENS…SSGNNEPNTA (186 aa). Pro residues-rich tracts occupy residues 9–19 and 29–47; these read NSPPSPTPPSP and SPPP…PPPD. Residues 48–137 show a composition bias toward low complexity; sequence DSSNGSPQPP…GNNNDNNNQN (90 aa). A glycan (N-linked (GlcNAc...) asparagine) is linked at N176. A helical transmembrane segment spans residues 187–207; sequence AIVGIVAGAGLLFLVMILFCV. Residues 208 to 700 are Cytoplasmic-facing; the sequence is CCCRKKKKKH…NNKTTPSRDH (493 aa). The disordered stretch occupies residues 249–315; it reads NLSQQYPGSN…GPSVPPPHPS (67 aa). The span at 255 to 265 shows a compositional bias: low complexity; sequence PGSNGNNNWMN. A compositionally biased stretch (pro residues) spans 266–286; that stretch reads SPPPPPPGSWQPSPPPPPPPV. T326 carries the post-translational modification Phosphothreonine. The Protein kinase domain maps to 337–615; sequence FSQSRLLGQG…VRALEGDATL (279 aa). ATP contacts are provided by residues 343-351 and K365; that span reads LGQGGFGYV. At Y410 the chain carries Phosphotyrosine. D461 (proton acceptor) is an active-site residue. 2 positions are modified to phosphoserine: S465 and S494. Residues T495 and T500 each carry the phosphothreonine modification. A Phosphotyrosine modification is found at Y508. 2 disordered regions span residues 616–642 and 659–700; these read DDLS…DSST and EYGA…SRDH. Over residues 689-700 the composition is skewed to polar residues; it reads ANNNKTTPSRDH.

Belongs to the protein kinase superfamily. Ser/Thr protein kinase family. In terms of tissue distribution, mostly expressed in flower buds.

The protein resides in the cell membrane. It carries out the reaction L-seryl-[protein] + ATP = O-phospho-L-seryl-[protein] + ADP + H(+). The enzyme catalyses L-threonyl-[protein] + ATP = O-phospho-L-threonyl-[protein] + ADP + H(+). In Arabidopsis thaliana (Mouse-ear cress), this protein is Putative proline-rich receptor-like protein kinase PERK6 (PERK6).